Here is a 249-residue protein sequence, read N- to C-terminus: MTKRLSSKQKVYTQTGINIWGKGPFLWKNNTKDKWKNTPGEHKKKHKLLERYSPMIRGDSINEMNQLGYLIPKSKNEVKISYYEPRYASQLKEKQKLRKFYANVTEKQFYNYYVKAKSFKGKIGDNLIKMLERRLDIIIYRAGFVNSIYQARLLVNHKHVLVNNKIQNISSYLVQNGDMISIKPEIVNLLRNQYNWDILQKSNGSFLKYLPYLEVDYKTMSCIYLYTPEMNEIYFPFQLDMNKVIRYYV.

An S4 RNA-binding domain is found at 133–193 (RRLDIIIYRA…PEIVNLLRNQ (61 aa)).

Belongs to the universal ribosomal protein uS4 family.

The protein localises to the mitochondrion. The protein is Small ribosomal subunit protein uS4m (RPS4) of Reclinomonas americana.